Reading from the N-terminus, the 82-residue chain is Small ribosomal subunit protein bS16 (82 aa).

The protein belongs to the bacterial ribosomal protein bS16 family.

The polypeptide is Small ribosomal subunit protein bS16 (Haemophilus ducreyi (strain 35000HP / ATCC 700724)).